A 613-amino-acid polypeptide reads, in one-letter code: DNA mismatch repair protein MutL (613 aa).

The protein belongs to the DNA mismatch repair MutL/HexB family.

Functionally, this protein is involved in the repair of mismatches in DNA. It is required for dam-dependent methyl-directed DNA mismatch repair. May act as a 'molecular matchmaker', a protein that promotes the formation of a stable complex between two or more DNA-binding proteins in an ATP-dependent manner without itself being part of a final effector complex. This chain is DNA mismatch repair protein MutL, found in Flavobacterium psychrophilum (strain ATCC 49511 / DSM 21280 / CIP 103535 / JIP02/86).